A 355-amino-acid polypeptide reads, in one-letter code: Countin-like protein (355 aa).

A signal peptide spans 1-27 (MNKSLFSLILLIITIFNLASNINIVSA). A disordered region spans residues 63 to 83 (NNHEDNNNNNNNNNNNNNAYN). The span at 69 to 83 (NNNNNNNNNNNNAYN) shows a compositional bias: low complexity. Residues 93–177 (GDIECVVCLD…ELITACSTPK (85 aa)) enclose the Saposin B-type domain. Cystine bridges form between C97–C173, C100–C167, and C128–C140. 7 N-linked (GlcNAc...) asparagine glycosylation sites follow: N132, N209, N242, N253, N254, N282, and N303. Residues 290-355 (ISNPTPTPTP…SSHYKNKINK (66 aa)) form a disordered region. The segment covering 301–342 (PSNSTTPTPTPTNSTPTPTSTSTPTSTPTSTPTPTPTSSSST) has biased composition (low complexity). Residues 345–355 (HSSHYKNKINK) show a composition bias toward basic residues.

Belongs to the countin family.

It is found in the secreted. This Dictyostelium discoideum (Social amoeba) protein is Countin-like protein.